We begin with the raw amino-acid sequence, 452 residues long: MLPCRSTGRRHALQHQPPQFKAHTGQRSTRSASIHRDRNNPDAHITSLEGQNPRPFGCSPPRSLQQQPAKPPQRGSLLDRDGIENITELWDRLQLLKQTLDHMPMADGLKPLKNFKSLQELLSLGGERLLGELAKQNIRVRQMMNEVAPLLHEDGSCTSLNYHLQPVIGVIYGPTGCGKSQLLRNLLSAQLVTPAPETVFFIVPQVDMIPPSEIKSWEMQICEGNYVPGPEGTIIPQSGTLCPKFVKLSYDDLTLDHNYDVSDPENIFAQAAARGPIAIIMDECMENLGSHKGVSKFFHAFPSKLHDKFPKCTGYTVFVVLHNMNPRRDLAGNIANLKIQSKLHIMSPRMHPTQLNRFINTYTKGLPLAISLLLKDIFNHHAQRCCYDWIIYNTNPEHEALQWSYLHPKDGLMPMYLNIQAHLYKILEHIHRVLNDRERWSRAYHVRKNKYQ.

Residues 1-78 (MLPCRSTGRR…AKPPQRGSLL (78 aa)) form a disordered region. 173–180 (GPTGCGKS) provides a ligand contact to ATP. The interval 442 to 452 (RAYHVRKNKYQ) is DNA-binding.

Belongs to the adenoviridae packaging protein 1 family. As to quaternary structure, homodimer. Part of a genome packaging complex composed of packaging proteins 1, 2 and 3; this complex specifically binds to the packaging sequence on the left end of viral genomic DNA and performs packaging of the viral genome. Interacts with protein 33K.

It localises to the virion. The protein resides in the host nucleus. Its subcellular location is the host nucleoplasm. It is found in the host nucleolus. Component of the packaging machinery which encapsidates the viral DNA into preformed capsids and transcriptional activator of the viral major late promoter (MLP). Binds, along with packaging proteins 2 and 3, to the specific packaging sequence on the left end of viral genomic DNA and displays ATPase activity thereby providing the power stroke of the packaging machinery. The activity of packaging protein IVa2 is stimulated by protein 33K which acts as a terminase. May be the protein that pumps DNA into the capsid powered by ATP hydrolysis. Specifically binds to the 5'-CG-3' nucleotides of the repeats making up the packaging sequence. Component of the DEF-A and DEF-B transcription factors that bind downstream elements of the major late promoter (MLP), and stimulate transcription from the MLP after initiation of viral DNA replication. DEF-A is a heterodimer packaging proteins 1 and 2 and DEF-B is a homodimer of packaging protein 1. This is Packaging protein 1 from Homo sapiens (Human).